A 461-amino-acid chain; its full sequence is Glycine--tRNA ligase (461 aa).

Substrate is bound by residues Arg100 and Glu163. Residues Arg195–Glu197, Phe205–Phe210, Glu282–Leu283, and Gly326–Arg329 each bind ATP. Phe210 to Glu214 is a substrate binding site. Position 322 to 326 (Glu322 to Gly326) interacts with substrate.

The protein belongs to the class-II aminoacyl-tRNA synthetase family. As to quaternary structure, homodimer.

The protein resides in the cytoplasm. It carries out the reaction tRNA(Gly) + glycine + ATP = glycyl-tRNA(Gly) + AMP + diphosphate. In terms of biological role, catalyzes the attachment of glycine to tRNA(Gly). The polypeptide is Glycine--tRNA ligase (Corynebacterium glutamicum (strain ATCC 13032 / DSM 20300 / JCM 1318 / BCRC 11384 / CCUG 27702 / LMG 3730 / NBRC 12168 / NCIMB 10025 / NRRL B-2784 / 534)).